Consider the following 216-residue polypeptide: Homologous-pairing protein 2 (216 aa).

The protein belongs to the HOP2 family. Interacts with mcp7.

The protein resides in the nucleus. Its function is as follows. Required for proper homologous pairing and efficient cross-over and intragenic recombination during meiosis. Acts indirectly in a process facilitating homologous recombination. Acts during mid- to late-horse-tail period. This is Homologous-pairing protein 2 (meu13) from Schizosaccharomyces pombe (strain 972 / ATCC 24843) (Fission yeast).